We begin with the raw amino-acid sequence, 756 residues long: 3-O-alpha-D-glucosyl-L-rhamnose phosphorylase (756 aa).

358-359 is a substrate binding site; the sequence is WD. The active-site Proton donor is the glutamate 486. Residue 590–591 coordinates substrate; sequence KQ.

The protein belongs to the glycosyl hydrolase 65 family. In terms of assembly, monomer.

It localises to the cytoplasm. The catalysed reaction is 3-O-alpha-D-glucosyl-L-rhamnose + phosphate = beta-D-glucose 1-phosphate + L-rhamnopyranose. Functionally, phosphorylase showing strict alpha-1,3-regioselectivity and producing 3-O-alpha-D-glucopyranosyl-L-rhamnopyranose. Specific for L-rhamnose as acceptor and beta-D-glucose 1-phosphate as donor. Does not phosphorylate alpha,alpha-trehalose, kojibiose, nigerose, or maltose. This Lachnoclostridium phytofermentans (strain ATCC 700394 / DSM 18823 / ISDg) (Clostridium phytofermentans) protein is 3-O-alpha-D-glucosyl-L-rhamnose phosphorylase.